Consider the following 381-residue polypeptide: Dual-specificity RNA methyltransferase RlmN (381 aa).

Catalysis depends on E96, which acts as the Proton acceptor. The Radical SAM core domain maps to 102–342 (TDDRGTLCVS…TRTTRGDDID (241 aa)). C109 and C345 form a disulfide bridge. 3 residues coordinate [4Fe-4S] cluster: C116, C120, and C123. S-adenosyl-L-methionine-binding positions include 170–171 (GE), S202, 224–226 (SLH), and N302. C345 (S-methylcysteine intermediate) is an active-site residue.

Belongs to the radical SAM superfamily. RlmN family. It depends on [4Fe-4S] cluster as a cofactor.

It is found in the cytoplasm. The catalysed reaction is adenosine(2503) in 23S rRNA + 2 reduced [2Fe-2S]-[ferredoxin] + 2 S-adenosyl-L-methionine = 2-methyladenosine(2503) in 23S rRNA + 5'-deoxyadenosine + L-methionine + 2 oxidized [2Fe-2S]-[ferredoxin] + S-adenosyl-L-homocysteine. The enzyme catalyses adenosine(37) in tRNA + 2 reduced [2Fe-2S]-[ferredoxin] + 2 S-adenosyl-L-methionine = 2-methyladenosine(37) in tRNA + 5'-deoxyadenosine + L-methionine + 2 oxidized [2Fe-2S]-[ferredoxin] + S-adenosyl-L-homocysteine. Specifically methylates position 2 of adenine 2503 in 23S rRNA and position 2 of adenine 37 in tRNAs. m2A2503 modification seems to play a crucial role in the proofreading step occurring at the peptidyl transferase center and thus would serve to optimize ribosomal fidelity. This is Dual-specificity RNA methyltransferase RlmN from Pseudomonas putida (strain GB-1).